Here is a 284-residue protein sequence, read N- to C-terminus: Hypersensitive-induced response protein 1 (284 aa).

G2 carries N-myristoyl glycine lipidation.

In terms of assembly, interacts with LRR1.

Its subcellular location is the cell membrane. Its function is as follows. Positive regulator of hypersensitive response (HR)-like cell death. May be involved in potassium ion channel regulation. The chain is Hypersensitive-induced response protein 1 from Oryza sativa subsp. japonica (Rice).